The following is a 134-amino-acid chain: Small ribosomal subunit protein bS6 (134 aa).

Residues E99–G134 are disordered. Basic and acidic residues predominate over residues Q105–G134.

This sequence belongs to the bacterial ribosomal protein bS6 family.

Binds together with bS18 to 16S ribosomal RNA. The chain is Small ribosomal subunit protein bS6 from Methylobacterium sp. (strain 4-46).